Reading from the N-terminus, the 198-residue chain is Molybdenum cofactor guanylyltransferase (198 aa).

GTP contacts are provided by residues 14–16 (LAG), K27, D73, and D103. A Mg(2+)-binding site is contributed by D103.

The protein belongs to the MobA family. As to quaternary structure, monomer. The cofactor is Mg(2+).

The protein localises to the cytoplasm. The catalysed reaction is Mo-molybdopterin + GTP + H(+) = Mo-molybdopterin guanine dinucleotide + diphosphate. Transfers a GMP moiety from GTP to Mo-molybdopterin (Mo-MPT) cofactor (Moco or molybdenum cofactor) to form Mo-molybdopterin guanine dinucleotide (Mo-MGD) cofactor. The protein is Molybdenum cofactor guanylyltransferase of Pseudomonas paraeruginosa (strain DSM 24068 / PA7) (Pseudomonas aeruginosa (strain PA7)).